The chain runs to 123 residues: Small ribosomal subunit protein uS12 (123 aa).

At aspartate 89 the chain carries 3-methylthioaspartic acid.

Belongs to the universal ribosomal protein uS12 family. In terms of assembly, part of the 30S ribosomal subunit. Contacts proteins S8 and S17. May interact with IF1 in the 30S initiation complex.

Its function is as follows. With S4 and S5 plays an important role in translational accuracy. In terms of biological role, interacts with and stabilizes bases of the 16S rRNA that are involved in tRNA selection in the A site and with the mRNA backbone. Located at the interface of the 30S and 50S subunits, it traverses the body of the 30S subunit contacting proteins on the other side and probably holding the rRNA structure together. The combined cluster of proteins S8, S12 and S17 appears to hold together the shoulder and platform of the 30S subunit. This Caulobacter sp. (strain K31) protein is Small ribosomal subunit protein uS12.